The sequence spans 298 residues: Acetylglutamate kinase (298 aa).

Residues 69–70 (GG), arginine 91, and asparagine 196 each bind substrate.

It belongs to the acetylglutamate kinase family. ArgB subfamily.

The protein localises to the cytoplasm. The enzyme catalyses N-acetyl-L-glutamate + ATP = N-acetyl-L-glutamyl 5-phosphate + ADP. It functions in the pathway amino-acid biosynthesis; L-arginine biosynthesis; N(2)-acetyl-L-ornithine from L-glutamate: step 2/4. In terms of biological role, catalyzes the ATP-dependent phosphorylation of N-acetyl-L-glutamate. The polypeptide is Acetylglutamate kinase (Rhodopseudomonas palustris (strain BisB5)).